Reading from the N-terminus, the 170-residue chain is MSLRVVRSVRAVACSLRIALASCPPRPWAPSAAAVRSLRTGSALLSVRKFTEKHEWVTAKDGIGTVGISNFAQEALGDVVYCSLPEVGTKLKKQEEFGALESVKAASELYSPLSGEVTEVNEALAENPGLVNKSCYEDGWLIKMTLSDPSELDELMSEEAYEKYVKSIEE.

Residues 1–45 (MSLRVVRSVRAVACSLRIALASCPPRPWAPSAAAVRSLRTGSALL) constitute a mitochondrion transit peptide. The Lipoyl-binding domain occupies 63–145 (IGTVGISNFA…YEDGWLIKMT (83 aa)). Lys-104 carries the post-translational modification N6-lipoyllysine.

This sequence belongs to the GcvH family. As to quaternary structure, the glycine cleavage system is composed of four proteins: P (GLDC), T (GCST), L (DLD) and H (GCSH). Interacts with GLDC. Requires (R)-lipoate as cofactor.

Its subcellular location is the mitochondrion. Functionally, the glycine cleavage system catalyzes the degradation of glycine. The H protein (GCSH) shuttles the methylamine group of glycine from the P protein (GLDC) to the T protein (GCST). Has a pivotal role in the lipoylation of enzymes involved in cellular energetics such as the mitochondrial dihydrolipoyllysine-residue acetyltransferase component of pyruvate dehydrogenase complex (DLAT), and the mitochondrial dihydrolipoyllysine-residue succinyltransferase component of 2-oxoglutarate dehydrogenase complex (DLST). In Rattus norvegicus (Rat), this protein is Glycine cleavage system H protein, mitochondrial.